Reading from the N-terminus, the 25-residue chain is Defensin D3 (25 aa).

Belongs to the DEFL family. Group IV subfamily. In terms of tissue distribution, distributed in the epidermal cell layer of leaves and in the subepidermal layer region of stems. Not in roots.

It is found in the secreted. It localises to the cell wall. Antimicrobial peptide. Active against Fusarium spp., Gram-positive and Gram-negative bacterial pathogens. This Spinacia oleracea (Spinach) protein is Defensin D3.